The following is a 65-amino-acid chain: Weak neurotoxin 6 (65 aa).

Cystine bridges form between Cys-3–Cys-24, Cys-6–Cys-11, Cys-17–Cys-42, Cys-46–Cys-57, and Cys-58–Cys-63.

It belongs to the three-finger toxin family. Ancestral subfamily. Orphan group II sub-subfamily. As to expression, expressed by the venom gland.

Its subcellular location is the secreted. In terms of biological role, binds with low affinity to muscular (alpha-1-beta-1-delta-epsilon/CHRNA1-CHRNB1-CHRND-CHRNE) and very low affinity to neuronal (alpha-7/CHRNA7) nicotinic acetylcholine receptor (nAChR). This chain is Weak neurotoxin 6, found in Naja naja (Indian cobra).